The primary structure comprises 83 residues: Cytochrome b559 subunit alpha (83 aa).

Residues 21–35 (VIHSITIPSLFIAGW) form a helical membrane-spanning segment. Residue H23 coordinates heme.

Belongs to the PsbE/PsbF family. As to quaternary structure, heterodimer of an alpha subunit and a beta subunit. PSII is composed of 1 copy each of membrane proteins PsbA, PsbB, PsbC, PsbD, PsbE, PsbF, PsbH, PsbI, PsbJ, PsbK, PsbL, PsbM, PsbT, PsbX, PsbY, PsbZ, Psb30/Ycf12, at least 3 peripheral proteins of the oxygen-evolving complex and a large number of cofactors. It forms dimeric complexes. Requires heme b as cofactor.

It is found in the plastid. The protein localises to the chloroplast thylakoid membrane. This b-type cytochrome is tightly associated with the reaction center of photosystem II (PSII). PSII is a light-driven water:plastoquinone oxidoreductase that uses light energy to abstract electrons from H(2)O, generating O(2) and a proton gradient subsequently used for ATP formation. It consists of a core antenna complex that captures photons, and an electron transfer chain that converts photonic excitation into a charge separation. The sequence is that of Cytochrome b559 subunit alpha from Zygnema circumcarinatum (Green alga).